Consider the following 217-residue polypeptide: MASISNEPERENRDEEETGANEDEDTGAQVAPIVRLEEVAVTTGEEDEDTILDLKSKLYRFDKDGSQWKERGAGTVKFLKHRVSGKIRLVMRQSKTLKICANHLVGSGMSVQEHAGNDKSCVWHARDFSDGELKDELFCIRFASVENCKAFMQKFKEVAESEEEKEESKDASDTAGLLEKLTVEEKESEKKPVEKAEENKKSEAVEEKKTEESVPSA.

Disordered stretches follow at residues Met1–Pro32 and Glu160–Ala217. At Ala2 the chain carries N-acetylalanine. Acidic residues predominate over residues Asp14–Thr26. In terms of domain architecture, RanBD1 spans Gln29–Glu164. Basic and acidic residues predominate over residues Leu181 to Ala217.

As to quaternary structure, interacts with the GTP-bound form of RAN1, RAN2 and RAN3.

It localises to the nucleus. Its subcellular location is the nuclear pore complex. The protein is Ran-binding protein 1 homolog b (RANBP1B) of Arabidopsis thaliana (Mouse-ear cress).